The following is a 451-amino-acid chain: MGKYFGTDGVRGVANQELTPELAFKLGRYGGYVLAHNKGEKHPRVLVGRDTRVSGEMLESALIAGLISIGAEVMRLGIISTPGVAYLTRDMGAELGVMISASHNPVADNGIKFFGSDGFKLSDEQENEIEALLDQENPELPRPVGNDIVHYSDYFEGAQKYLSYLKSTVDVNFEGLKIVLDGANGSTSSLAPFLFGDLEADTETIGCSPDGYNINEKCGSTHPEKLAEKVVETESDFGLAFDGDGDRIIAVDENGQIVDGDQIMFIIGQEMHKNQELNNDMIVSTVMSNLGFYKALEQEGIKSNKTKVGDRYVVEEMRRGNYNLGGEQSGHIVMMDYNTTGDGLLTGIQLASVIKMTGKSLSELAGQMKKYPQSLINVRVTDKYRVEENVDVKEVMTKVEVEMNGEGRILVRPSGTEPLVRVMVEAATDEDAERFAQQIADVVQDKMGLDK.

Residue Ser102 is the Phosphoserine intermediate of the active site. Mg(2+)-binding residues include Ser102, Asp242, Asp244, and Asp246. At Ser102 the chain carries Phosphoserine.

This sequence belongs to the phosphohexose mutase family. Mg(2+) is required as a cofactor. Activated by phosphorylation.

The enzyme catalyses alpha-D-glucosamine 1-phosphate = D-glucosamine 6-phosphate. Functionally, catalyzes the conversion of glucosamine-6-phosphate to glucosamine-1-phosphate. The protein is Phosphoglucosamine mutase of Staphylococcus aureus (strain Mu3 / ATCC 700698).